The chain runs to 412 residues: Phytoene synthase, chloroplastic (412 aa).

This sequence belongs to the phytoene/squalene synthase family. As to quaternary structure, monomer. As to expression, expressed in roots, leaves, flower buds, sepals, petals, lips and lip crests.

It localises to the plastid. Its subcellular location is the chloroplast. The enzyme catalyses 2 (2E,6E,10E)-geranylgeranyl diphosphate = 15-cis-phytoene + 2 diphosphate. The protein operates within carotenoid biosynthesis; phytoene biosynthesis; all-trans-phytoene from geranylgeranyl diphosphate: step 1/1. Functionally, catalyzes the reaction from prephytoene diphosphate to phytoene. The sequence is that of Phytoene synthase, chloroplastic (PSY) from Oncidium hybrid cultivar (Orchid).